The following is a 528-amino-acid chain: Benzoylformate decarboxylase (528 aa).

2 residues coordinate Mg(2+): Gln-117 and Leu-118. The interval 377–460 is thiamine pyrophosphate binding; it reads TSTVTAFWQR…IILKNGTYGA (84 aa). Ca(2+) is bound by residues Asp-428, Asn-455, and Thr-457.

Belongs to the TPP enzyme family. Homotetramer. Requires Ca(2+) as cofactor. Thiamine diphosphate serves as cofactor. Mg(2+) is required as a cofactor.

It catalyses the reaction phenylglyoxylate + H(+) = benzaldehyde + CO2. It functions in the pathway aromatic compound metabolism; (R)-mandelate degradation; benzoate from (R)-mandelate: step 3/4. In Pseudomonas aeruginosa (strain ATCC 15692 / DSM 22644 / CIP 104116 / JCM 14847 / LMG 12228 / 1C / PRS 101 / PAO1), this protein is Benzoylformate decarboxylase (mdlC).